Reading from the N-terminus, the 87-residue chain is uncharacterized protein (87 aa).

The signal sequence occupies residues 1–19; sequence MLVLLVAVLVTAVYAFVHA. Residues 39–59 traverse the membrane as a helical segment; the sequence is LVILGAAVALASILYPVLGVL.

To M.leprae ML2453.

Its subcellular location is the membrane. This is an uncharacterized protein from Mycobacterium bovis (strain ATCC BAA-935 / AF2122/97).